The primary structure comprises 292 residues: S-adenosyl-L-methionine-dependent Diels-Alderase iccD (292 aa).

Residues 240–262 (LPVVRMFYVVLLVPYLFVRLLGI) traverse the membrane as a helical segment.

The protein belongs to the class I-like SAM-binding methyltransferase superfamily. Erg6/SMT family. S-adenosyl-L-methionine serves as cofactor.

Its subcellular location is the membrane. It catalyses the reaction 3-[(2E,4E,8S,10E,12Z)-4,8-dimethyltetradeca-2,4,10,12-tetraenoyl]-4-hydroxy-5-(4-hydroxyphenyl)-1,2-dihydropyridin-2-one = 8-epi-ilicicolin H. It functions in the pathway mycotoxin biosynthesis. S-adenosyl-l-methionine-dependent Diels-Alderase; part of the gene cluster that mediates the biosynthesis of ilicicolin H, a 4-hydroxy-2-pyridonealkaloid that has potent and broad antifungal activities by inhibiting the mitochondrial respiration chain. IccD catalyzes the Diels-Alder reaction that converts the acyclic 2-pyridone intermediate to 8-epi-ilicicolin H. The biosynthesis of ilicicolin H starts with formation of the tetramic acid by the hybrid PKS-NRPS synthetase iccA with the partnering trans-enoyl reductase iccB since iccA lacks a designated enoylreductase (ER) domain. The cytochrome P450 monooxygenase iccC then catalyzes the ring expansion of the tetramate to the acyclic 2-pyridone. The pericyclase iccD further converts the acyclic 2-pyridone into 8-epi-ilicicolin H. Finally, the epimerase iccE converts 8-epi-ilicicolin H into ilicicolin H via epimerization. IccA to iccE are sufficient for ilicicolin H biosynthesis and the roles of the remaining enzymes, iccF, iccG and iccH within the pathway have still to be determined. This Talaromyces variabilis (Penicillium variabile) protein is S-adenosyl-L-methionine-dependent Diels-Alderase iccD.